Reading from the N-terminus, the 326-residue chain is NADH-quinone oxidoreductase subunit H (326 aa).

8 helical membrane-spanning segments follow: residues 11–31 (ILLSILKAVVILLVVVSCGAF), 81–101 (VIFTLAPMIAFTSLLLAFAIV), 114–134 (IGILFFLMMAGLGVYAVLFAG), 154–174 (LSYEVFLGLSLMGVVAQAGSF), 186–206 (LWNVIPQFFGFITFAIAGVAV), 237–257 (FFVGEYIGIVTVSALIVTLFF), 265–285 (LPPFIWFALKTAFFMMMFILI), and 302–322 (WKVCLPLTLINLLVTAAVILW).

This sequence belongs to the complex I subunit 1 family. As to quaternary structure, NDH-1 is composed of 13 different subunits. Subunits NuoA, H, J, K, L, M, N constitute the membrane sector of the complex.

It localises to the cell inner membrane. It catalyses the reaction a quinone + NADH + 5 H(+)(in) = a quinol + NAD(+) + 4 H(+)(out). NDH-1 shuttles electrons from NADH, via FMN and iron-sulfur (Fe-S) centers, to quinones in the respiratory chain. The immediate electron acceptor for the enzyme in this species is believed to be ubiquinone. Couples the redox reaction to proton translocation (for every two electrons transferred, four hydrogen ions are translocated across the cytoplasmic membrane), and thus conserves the redox energy in a proton gradient. This subunit may bind ubiquinone. This Cronobacter sakazakii (strain ATCC BAA-894) (Enterobacter sakazakii) protein is NADH-quinone oxidoreductase subunit H.